A 312-amino-acid polypeptide reads, in one-letter code: Apolipoprotein E (312 aa).

Residues 1 to 18 (MKALWAVLLATLLTGCLA) form the signal peptide. 8 repeat units span residues 72-93 (VLME…EQLG), 94-115 (PVAE…ARLG), 116-137 (ADME…TMLG), 138-159 (QNTE…KRLM), 160-181 (RDAE…EGAE), 182-203 (RGVS…QRTA), 204-225 (NLGA…ERLR), and 226-247 (GRLE…EHME). The interval 72–247 (VLMEDTMTEV…RLEEMREHME (176 aa)) is 8 X 22 AA approximate tandem repeats. Met-135 carries the post-translational modification Methionine sulfoxide. Residues 150–160 (HLRKMRKRLMR) are LDL and other lipoprotein receptors binding. The tract at residues 150–160 (HLRKMRKRLMR) is LDL receptor binding. 154 to 157 (MRKR) contacts heparin. The segment at 202–282 (TANLGAGAAQ…SWFEPLVEDM (81 aa)) is lipid-binding and lipoprotein association. Position 221–228 (221–228 (SERLRGRL)) interacts with heparin. A homooligomerization region spans residues 258–312 (QQIRLQAEIFQARLKSWFEPLVEDMHRQLANLVEKIQSSVATNSVLSTSVPQENQ). A specificity for association with VLDL region spans residues 270–282 (RLKSWFEPLVEDM).

The protein belongs to the apolipoprotein A1/A4/E family. As to quaternary structure, homotetramer. May interact with ABCA1; functionally associated with ABCA1 in the biogenesis of HDLs. May interact with APP/A4 amyloid-beta peptide; the interaction is extremely stable in vitro but its physiological significance is unclear. May interact with MAPT. May interact with MAP2. In the cerebrospinal fluid, interacts with secreted SORL1. Interacts with PMEL; this allows the loading of PMEL luminal fragment on ILVs to induce fibril nucleation. Post-translationally, APOE exists as multiple glycosylated and sialylated glycoforms within cells and in plasma. The extent of glycosylation and sialylation are tissue and context specific. Glycated in plasma VLDL. In terms of processing, phosphorylated by FAM20C in the extracellular medium.

It localises to the secreted. The protein resides in the extracellular space. It is found in the extracellular matrix. Its subcellular location is the extracellular vesicle. The protein localises to the endosome. It localises to the multivesicular body. APOE is an apolipoprotein, a protein associating with lipid particles, that mainly functions in lipoprotein-mediated lipid transport between organs via the plasma and interstitial fluids. APOE is a core component of plasma lipoproteins and is involved in their production, conversion and clearance. Apolipoproteins are amphipathic molecules that interact both with lipids of the lipoprotein particle core and the aqueous environment of the plasma. As such, APOE associates with chylomicrons, chylomicron remnants, very low density lipoproteins (VLDL) and intermediate density lipoproteins (IDL) but shows a preferential binding to high-density lipoproteins (HDL). It also binds a wide range of cellular receptors including the LDL receptor/LDLR, the LDL receptor-related proteins LRP1, LRP2 and LRP8 and the very low-density lipoprotein receptor/VLDLR that mediate the cellular uptake of the APOE-containing lipoprotein particles. Finally, APOE also has a heparin-binding activity and binds heparan-sulfate proteoglycans on the surface of cells, a property that supports the capture and the receptor-mediated uptake of APOE-containing lipoproteins by cells. A main function of APOE is to mediate lipoprotein clearance through the uptake of chylomicrons, VLDLs, and HDLs by hepatocytes. APOE is also involved in the biosynthesis by the liver of VLDLs as well as their uptake by peripheral tissues ensuring the delivery of triglycerides and energy storage in muscle, heart and adipose tissues. By participating in the lipoprotein-mediated distribution of lipids among tissues, APOE plays a critical role in plasma and tissues lipid homeostasis. APOE is also involved in two steps of reverse cholesterol transport, the HDLs-mediated transport of cholesterol from peripheral tissues to the liver, and thereby plays an important role in cholesterol homeostasis. First, it is functionally associated with ABCA1 in the biogenesis of HDLs in tissues. Second, it is enriched in circulating HDLs and mediates their uptake by hepatocytes. APOE also plays an important role in lipid transport in the central nervous system, regulating neuron survival and sprouting. The chain is Apolipoprotein E (Apoe) from Arvicanthis niloticus (African grass rat).